The primary structure comprises 457 residues: Fibrinogen C domain-containing protein 1-B (457 aa).

The segment at 1-21 is disordered; the sequence is MGSDRWKNIRGTPQMEDSVQE. Residues 1 to 33 lie on the Cytoplasmic side of the membrane; that stretch reads MGSDRWKNIRGTPQMEDSVQEKSQRKGCGYILC. The helical; Signal-anchor for type II membrane protein transmembrane segment at 34 to 54 threads the bilayer; sequence TVLLSVAVLLAVTVTGAVLFM. Topologically, residues 55–457 are extracellular; sequence NQYHAPSTEP…MKIRPQREEN (403 aa). The region spanning 231-454 is the Fibrinogen C-terminal domain; it reads CANGSKPRDC…FTEMKIRPQR (224 aa). N233 carries an N-linked (GlcNAc...) asparagine glycan. The cysteines at positions 240 and 269 are disulfide-linked. An N-linked (GlcNAc...) asparagine glycan is attached at N336. The Ca(2+) site is built by D389 and D391. A disulfide bridge connects residues C397 and C410.

Homotetramer; disulfide-linked.

The protein localises to the membrane. Acetyl group-binding receptor which shows a calcium-dependent binding to acetylated structures such as chitin, some N-acetylated carbohydrates, and amino acids. This chain is Fibrinogen C domain-containing protein 1-B (fibcd1-b), found in Xenopus laevis (African clawed frog).